We begin with the raw amino-acid sequence, 355 residues long: 5-formaminoimidazole-4-carboxamide-1-(beta)-D-ribofuranosyl 5'-monophosphate synthetase (355 aa).

Residues His27 and Ser94 each contribute to the 5-amino-1-(5-phospho-beta-D-ribosyl)imidazole-4-carboxamide site. The region spanning 101 to 332 is the ATP-grasp domain; it reads TESFAELAVP…YSDMIEENLS (232 aa). ATP is bound by residues 144–195 and Glu225; that span reads PEKI…TRYY. Asn254 lines the 5-amino-1-(5-phospho-beta-D-ribosyl)imidazole-4-carboxamide pocket. Residues Glu292 and Glu305 each contribute to the Mg(2+) site.

It belongs to the phosphohexose mutase family. Requires Mg(2+) as cofactor. It depends on Mn(2+) as a cofactor.

It carries out the reaction 5-amino-1-(5-phospho-beta-D-ribosyl)imidazole-4-carboxamide + formate + ATP = 5-formamido-1-(5-phospho-D-ribosyl)imidazole-4-carboxamide + ADP + phosphate. The protein operates within purine metabolism; IMP biosynthesis via de novo pathway; 5-formamido-1-(5-phospho-D-ribosyl)imidazole-4-carboxamide from 5-amino-1-(5-phospho-D-ribosyl)imidazole-4-carboxamide (formate route): step 1/1. Functionally, catalyzes the ATP- and formate-dependent formylation of 5-aminoimidazole-4-carboxamide-1-beta-d-ribofuranosyl 5'-monophosphate (AICAR) to 5-formaminoimidazole-4-carboxamide-1-beta-d-ribofuranosyl 5'-monophosphate (FAICAR) in the absence of folates. This chain is 5-formaminoimidazole-4-carboxamide-1-(beta)-D-ribofuranosyl 5'-monophosphate synthetase, found in Methanococcoides burtonii (strain DSM 6242 / NBRC 107633 / OCM 468 / ACE-M).